We begin with the raw amino-acid sequence, 594 residues long: DNA polymerase epsilon subunit B (594 aa).

This sequence belongs to the DNA polymerase epsilon subunit B family. In terms of assembly, heterotetramer. Consists of four subunits: pol2, dpb2, dpb3 and dpb4. Interacts with dpb3.

The protein resides in the nucleus. As accessory component of the DNA polymerase epsilon (DNA polymerase II) participates in chromosomal DNA replication. This chain is DNA polymerase epsilon subunit B (dpb2), found in Schizosaccharomyces pombe (strain 972 / ATCC 24843) (Fission yeast).